The following is a 227-amino-acid chain: Esterase OVCA2 (227 aa).

The tract at residues 44-68 (GPHPVPDPPGPEGARSDFGSCPPEE) is disordered. Active-site charge relay system residues include serine 119, aspartate 179, and histidine 206.

The protein belongs to the LovG family. Proteolytically degraded in response to RA and 4HPR treatment in a time- and dose-dependent manner in the promyelocytic leukemia cell line HL-60. In terms of tissue distribution, ubiquitously expressed.

It catalyses the reaction a carboxylic ester + H2O = an alcohol + a carboxylate + H(+). In terms of biological role, exhibits ester hydrolase activity with a strong preference for long-chain alkyl ester substrates and high selectivity against a variety of short, branched, and substituted esters. Is able to hydrolyze ester bonds within a wide range of p-nitrophenyl derivatives (C2-C14) in vitro, with a strong preference toward substrates of &gt;8 carbons. This Homo sapiens (Human) protein is Esterase OVCA2.